The chain runs to 212 residues: MPTREIRHPLIRHKLGLMRRADISTKNFRELAQEVGALLTYEATQDLPLETYEIDGWCGKVSVEKIAGKKITVVPILRAGIGMLDGVLSLIPGAKVSAVGVARNEETLEAHTYLEKLAPDINQRLALIIDPMLATGGSMVATIDLLKKAGCKEIRAMVLVAAPEGIEVVEKAHPDVKIYTASIDQRLNEHGYIVPGLGDAGDKIFGTKQKDA.

Residues Arg78, Arg103, and 130 to 138 (DPMLATGGS) each bind 5-phospho-alpha-D-ribose 1-diphosphate. Residues Ile193 and 198–200 (GDA) each bind uracil. A 5-phospho-alpha-D-ribose 1-diphosphate-binding site is contributed by Asp199.

It belongs to the UPRTase family. The cofactor is Mg(2+).

It carries out the reaction UMP + diphosphate = 5-phospho-alpha-D-ribose 1-diphosphate + uracil. Its pathway is pyrimidine metabolism; UMP biosynthesis via salvage pathway; UMP from uracil: step 1/1. Its activity is regulated as follows. Allosterically activated by GTP. Catalyzes the conversion of uracil and 5-phospho-alpha-D-ribose 1-diphosphate (PRPP) to UMP and diphosphate. The polypeptide is Uracil phosphoribosyltransferase (Pseudomonas putida (strain ATCC 700007 / DSM 6899 / JCM 31910 / BCRC 17059 / LMG 24140 / F1)).